The following is a 915-amino-acid chain: Bifunctional uridylyltransferase/uridylyl-removing enzyme (915 aa).

Positions 1–360 (MFNCAVTAID…PDEERPKKQP (360 aa)) are uridylyltransferase. The segment at 361-731 (INARFNQVGE…EHRELALDAV (371 aa)) is uridylyl-removing. The HD domain occupies 478–594 (VDAHTLFLIR…TLFADLVGNV (117 aa)). ACT domains follow at residues 732-817 (QVFV…RIPR) and 840-915 (IMSL…NDSI).

It belongs to the GlnD family. It depends on Mg(2+) as a cofactor.

It carries out the reaction [protein-PII]-L-tyrosine + UTP = [protein-PII]-uridylyl-L-tyrosine + diphosphate. It catalyses the reaction [protein-PII]-uridylyl-L-tyrosine + H2O = [protein-PII]-L-tyrosine + UMP + H(+). Uridylyltransferase (UTase) activity is inhibited by glutamine, while glutamine activates uridylyl-removing (UR) activity. Functionally, modifies, by uridylylation and deuridylylation, the PII regulatory proteins (GlnB and homologs), in response to the nitrogen status of the cell that GlnD senses through the glutamine level. Under low glutamine levels, catalyzes the conversion of the PII proteins and UTP to PII-UMP and PPi, while under higher glutamine levels, GlnD hydrolyzes PII-UMP to PII and UMP (deuridylylation). Thus, controls uridylylation state and activity of the PII proteins, and plays an important role in the regulation of nitrogen assimilation and metabolism. The sequence is that of Bifunctional uridylyltransferase/uridylyl-removing enzyme from Psychrobacter arcticus (strain DSM 17307 / VKM B-2377 / 273-4).